Reading from the N-terminus, the 122-residue chain is Large ribosomal subunit protein uL14 (122 aa).

Belongs to the universal ribosomal protein uL14 family. As to quaternary structure, part of the 50S ribosomal subunit. Forms a cluster with proteins L3 and L19. In the 70S ribosome, L14 and L19 interact and together make contacts with the 16S rRNA in bridges B5 and B8.

Its function is as follows. Binds to 23S rRNA. Forms part of two intersubunit bridges in the 70S ribosome. The chain is Large ribosomal subunit protein uL14 from Mycobacterium marinum (strain ATCC BAA-535 / M).